We begin with the raw amino-acid sequence, 334 residues long: 6-phosphogluconolactonase (334 aa).

It belongs to the cycloisomerase 2 family.

The enzyme catalyses 6-phospho-D-glucono-1,5-lactone + H2O = 6-phospho-D-gluconate + H(+). Its pathway is carbohydrate degradation; pentose phosphate pathway; D-ribulose 5-phosphate from D-glucose 6-phosphate (oxidative stage): step 2/3. Catalyzes the hydrolysis of 6-phosphogluconolactone to 6-phosphogluconate. The protein is 6-phosphogluconolactonase of Yersinia pseudotuberculosis serotype IB (strain PB1/+).